The primary structure comprises 505 residues: Alpha-1-syntrophin (505 aa).

Disordered stretches follow at residues 1-25 and 40-77; these read MASGRRAPRTGLLELRAGAGSGAGG and LTVSPADGDPGPEPGAPREQEPAQLNGAAEPGAGPPQL. PH domains lie at 6–269 and 293–401; these read RAPR…AQVN and DIKQ…DGCH. Positions 87-170 constitute a PDZ domain; that stretch reads RVTVRKADAG…EVVLEVKYMK (84 aa). A phosphoserine mark is found at S101, S184, S189, S193, and S200. The tract at residues 180–210 is disordered; the sequence is TGGTSVGWDSPPASPLQRQPSSPGPTPRNFS. Residues 449 to 505 form the SU domain; sequence PFEKLQMSSDDGASLLFLDFGGAEGEIQLDLHSCPKTIVFIIHSFLSAKVTRLGLLA. The interval 483–505 is calmodulin-binding; the sequence is PKTIVFIIHSFLSAKVTRLGLLA.

Belongs to the syntrophin family. In terms of assembly, monomer and homodimer. Interacts with the other members of the syntrophin family SNTB1 and SNTB2; SGCG and SGCA of the dystrophin glycoprotein complex; NOS1; GRB2; the sodium channel proteins SCN4A and SCN5A; F-actin and calmodulin. Interacts with dystrophin protein DMD and related proteins DTNA and UTRN and with MAPK12, TGFA and GA. Interacts with MYOC; regulates muscle hypertrophy. Interacts with DTNB. Phosphorylated by CaM-kinase II. Phosphorylation may inhibit the interaction with DMD. In terms of tissue distribution, high expression in skeletal muscle and heart. Low expression in brain, pancreas, liver, kidney and lung. Not detected in placenta.

The protein localises to the cell membrane. The protein resides in the sarcolemma. It localises to the cell junction. It is found in the cytoplasm. Its subcellular location is the cytoskeleton. Its function is as follows. Adapter protein that binds to and probably organizes the subcellular localization of a variety of membrane proteins. May link various receptors to the actin cytoskeleton and the extracellular matrix via the dystrophin glycoprotein complex. Plays an important role in synapse formation and in the organization of UTRN and acetylcholine receptors at the neuromuscular synapse. Binds to phosphatidylinositol 4,5-bisphosphate. This chain is Alpha-1-syntrophin (SNTA1), found in Homo sapiens (Human).